Here is a 553-residue protein sequence, read N- to C-terminus: Chaperonin GroEL (553 aa).

Residues 30-33 (TLGP), lysine 51, 87-91 (DGTTT), glycine 416, and aspartate 496 contribute to the ATP site.

The protein belongs to the chaperonin (HSP60) family. In terms of assembly, forms a cylinder of 14 subunits composed of two heptameric rings stacked back-to-back. Interacts with the co-chaperonin GroES.

The protein localises to the cytoplasm. The enzyme catalyses ATP + H2O + a folded polypeptide = ADP + phosphate + an unfolded polypeptide.. Together with its co-chaperonin GroES, plays an essential role in assisting protein folding. The GroEL-GroES system forms a nano-cage that allows encapsulation of the non-native substrate proteins and provides a physical environment optimized to promote and accelerate protein folding. This Alkalilimnicola ehrlichii (strain ATCC BAA-1101 / DSM 17681 / MLHE-1) protein is Chaperonin GroEL.